The primary structure comprises 206 residues: Large ribosomal subunit protein uL4 (206 aa).

The protein belongs to the universal ribosomal protein uL4 family. As to quaternary structure, part of the 50S ribosomal subunit.

Functionally, one of the primary rRNA binding proteins, this protein initially binds near the 5'-end of the 23S rRNA. It is important during the early stages of 50S assembly. It makes multiple contacts with different domains of the 23S rRNA in the assembled 50S subunit and ribosome. Forms part of the polypeptide exit tunnel. This is Large ribosomal subunit protein uL4 from Methylobacterium radiotolerans (strain ATCC 27329 / DSM 1819 / JCM 2831 / NBRC 15690 / NCIMB 10815 / 0-1).